The following is a 294-amino-acid chain: MTTEVLSGKPLAAIIQQRAHEETALLDDEGVRPVLAVVVATDDESTHWYVRSIERAAGRAGIGCRIIDLGHDATEQVLASVLADLSAEPTVHGIILQTPLPAAVRADRLVGLIAPEKDIDGANPLSLGRLAVGQPAFAPATAQAVVELLDHFQIPVAGRNVAVVGRSAVVGKPLSLLLLERDATVTICHSKSGPLERYTQPADVVVVAAGRTGLLKGSHLSPETVVIDVGTNVLPDGSLVGDVDEASVTGVAAGLSPVPGGVGSVTTALLLLHTVEAARQQSRSGLLTASTSRI.

Residues 165–167, serine 190, and threonine 231 contribute to the NADP(+) site; that span reads GRS.

Belongs to the tetrahydrofolate dehydrogenase/cyclohydrolase family. As to quaternary structure, homodimer.

The catalysed reaction is (6R)-5,10-methylene-5,6,7,8-tetrahydrofolate + NADP(+) = (6R)-5,10-methenyltetrahydrofolate + NADPH. It catalyses the reaction (6R)-5,10-methenyltetrahydrofolate + H2O = (6R)-10-formyltetrahydrofolate + H(+). Its pathway is one-carbon metabolism; tetrahydrofolate interconversion. Its function is as follows. Catalyzes the oxidation of 5,10-methylenetetrahydrofolate to 5,10-methenyltetrahydrofolate and then the hydrolysis of 5,10-methenyltetrahydrofolate to 10-formyltetrahydrofolate. The chain is Bifunctional protein FolD 1 from Paenarthrobacter aurescens (strain TC1).